The following is a 285-amino-acid chain: Bifunctional protein FolD (285 aa).

NADP(+) is bound by residues 166 to 168, Ser-191, and Thr-232; that span reads GRS.

This sequence belongs to the tetrahydrofolate dehydrogenase/cyclohydrolase family. As to quaternary structure, homodimer.

It catalyses the reaction (6R)-5,10-methylene-5,6,7,8-tetrahydrofolate + NADP(+) = (6R)-5,10-methenyltetrahydrofolate + NADPH. The catalysed reaction is (6R)-5,10-methenyltetrahydrofolate + H2O = (6R)-10-formyltetrahydrofolate + H(+). Its pathway is one-carbon metabolism; tetrahydrofolate interconversion. Catalyzes the oxidation of 5,10-methylenetetrahydrofolate to 5,10-methenyltetrahydrofolate and then the hydrolysis of 5,10-methenyltetrahydrofolate to 10-formyltetrahydrofolate. In Chloroflexus aggregans (strain MD-66 / DSM 9485), this protein is Bifunctional protein FolD.